The primary structure comprises 443 residues: Glucose-6-phosphate isomerase (443 aa).

The active-site Proton donor is the Glu285. Residues His306 and Lys420 contribute to the active site.

The protein belongs to the GPI family.

The protein localises to the cytoplasm. It catalyses the reaction alpha-D-glucose 6-phosphate = beta-D-fructose 6-phosphate. It participates in carbohydrate biosynthesis; gluconeogenesis. Its pathway is carbohydrate degradation; glycolysis; D-glyceraldehyde 3-phosphate and glycerone phosphate from D-glucose: step 2/4. Its function is as follows. Catalyzes the reversible isomerization of glucose-6-phosphate to fructose-6-phosphate. The sequence is that of Glucose-6-phosphate isomerase from Staphylococcus aureus (strain NCTC 8325 / PS 47).